A 124-amino-acid chain; its full sequence is Small ribosomal subunit protein uS12 (124 aa).

Positions 1 to 42 (MPTTQQLIRKGRKTEEETSDAPALEGSPQRRGVCTRVYTTTP) are disordered. At D89 the chain carries 3-methylthioaspartic acid. Residues 105–124 (AGVEERRQGRSKYGTKKPRE) form a disordered region. Basic residues predominate over residues 113–124 (GRSKYGTKKPRE).

Belongs to the universal ribosomal protein uS12 family. In terms of assembly, part of the 30S ribosomal subunit. Contacts proteins S8 and S17. May interact with IF1 in the 30S initiation complex.

With S4 and S5 plays an important role in translational accuracy. Functionally, interacts with and stabilizes bases of the 16S rRNA that are involved in tRNA selection in the A site and with the mRNA backbone. Located at the interface of the 30S and 50S subunits, it traverses the body of the 30S subunit contacting proteins on the other side and probably holding the rRNA structure together. The combined cluster of proteins S8, S12 and S17 appears to hold together the shoulder and platform of the 30S subunit. This chain is Small ribosomal subunit protein uS12, found in Salinibacter ruber (strain DSM 13855 / M31).